A 100-amino-acid chain; its full sequence is Urease subunit gamma (100 aa).

Belongs to the urease gamma subunit family. Heterotrimer of UreA (gamma), UreB (beta) and UreC (alpha) subunits. Three heterotrimers associate to form the active enzyme.

Its subcellular location is the cytoplasm. It catalyses the reaction urea + 2 H2O + H(+) = hydrogencarbonate + 2 NH4(+). The protein operates within nitrogen metabolism; urea degradation; CO(2) and NH(3) from urea (urease route): step 1/1. In Pseudomonas syringae pv. tomato (strain ATCC BAA-871 / DC3000), this protein is Urease subunit gamma.